The chain runs to 46 residues: Endochitinase 2 (46 aa).

This sequence belongs to the glycosyl hydrolase 19 family. Chitinase class I subfamily.

It carries out the reaction Random endo-hydrolysis of N-acetyl-beta-D-glucosaminide (1-&gt;4)-beta-linkages in chitin and chitodextrins.. In terms of biological role, defense against chitin-containing fungal and bacterial pathogens. This chain is Endochitinase 2, found in Arachis hypogaea (Peanut).